A 256-amino-acid polypeptide reads, in one-letter code: Pimeloyl-[acyl-carrier protein] methyl ester esterase (256 aa).

In terms of domain architecture, AB hydrolase-1 spans 15-242 (HLVLLHGWGL…AAHAPFISHP (228 aa)). Substrate is bound by residues tryptophan 22, 82-83 (SL), and 143-147 (FLALQ). Serine 82 serves as the catalytic Nucleophile. Residues aspartate 207 and histidine 235 contribute to the active site. Residue histidine 235 participates in substrate binding.

It belongs to the AB hydrolase superfamily. Carboxylesterase BioH family. As to quaternary structure, monomer.

It is found in the cytoplasm. It carries out the reaction 6-carboxyhexanoyl-[ACP] methyl ester + H2O = 6-carboxyhexanoyl-[ACP] + methanol + H(+). Its pathway is cofactor biosynthesis; biotin biosynthesis. The physiological role of BioH is to remove the methyl group introduced by BioC when the pimeloyl moiety is complete. It allows to synthesize pimeloyl-ACP via the fatty acid synthetic pathway through the hydrolysis of the ester bonds of pimeloyl-ACP esters. The sequence is that of Pimeloyl-[acyl-carrier protein] methyl ester esterase from Escherichia coli O157:H7.